Here is a 657-residue protein sequence, read N- to C-terminus: Translation factor GUF1, mitochondrial (657 aa).

A mitochondrion-targeting transit peptide spans 1–39 (MRGCLQSVKWLTSALRPSQSLASSTRYPRRLLSTSAPRN). A tr-type G domain is found at 59-239 (ERFRNFCIVA…TVIEQIPAPV (181 aa)). Residues 121–128 (HQGEDYLL), 185–189 (INKVD), and 239–242 (VGDR) each bind GTP.

This sequence belongs to the TRAFAC class translation factor GTPase superfamily. Classic translation factor GTPase family. LepA subfamily.

The protein localises to the mitochondrion inner membrane. The catalysed reaction is GTP + H2O = GDP + phosphate + H(+). Promotes mitochondrial protein synthesis. May act as a fidelity factor of the translation reaction, by catalyzing a one-codon backward translocation of tRNAs on improperly translocated ribosomes. Binds to mitochondrial ribosomes in a GTP-dependent manner. This chain is Translation factor GUF1, mitochondrial, found in Ajellomyces capsulatus (strain H143) (Darling's disease fungus).